A 354-amino-acid polypeptide reads, in one-letter code: Guanine nucleotide-binding protein G(o) subunit alpha (354 aa).

Residue Gly-2 is the site of N-myristoyl glycine attachment. Cys-3 carries the S-palmitoyl cysteine lipid modification. One can recognise a G-alpha domain in the interval 32 to 354 (KDIKLLLLGA…ANNLRGCGLY (323 aa)). Residues 35–48 (KLLLLGAGESGKST) form a G1 motif region. GTP is bound by residues 40 to 47 (GAGESGKS), 176 to 182 (LRTRVKT), 201 to 205 (DVGGQ), 270 to 273 (NKKD), and Ala-326. The Mg(2+) site is built by Ser-47 and Thr-182. Residues 174-182 (DILRTRVKT) form a G2 motif region. The G3 motif stretch occupies residues 197–206 (FKLFDVGGQR). A G4 motif region spans residues 266–273 (ILFLNKKD). The G5 motif stretch occupies residues 324-329 (TCATDT).

It belongs to the G-alpha family. G(i/o/t/z) subfamily. In terms of assembly, g proteins are composed of 3 units; alpha, beta and gamma. The alpha chain contains the guanine nucleotide binding site.

In terms of biological role, guanine nucleotide-binding proteins (G proteins) are involved as modulators or transducers in various transmembrane signaling systems. The G(o) protein function is not clear. This is Guanine nucleotide-binding protein G(o) subunit alpha from Locusta migratoria (Migratory locust).